The primary structure comprises 466 residues: Asparagine--tRNA ligase (466 aa).

It belongs to the class-II aminoacyl-tRNA synthetase family. In terms of assembly, homodimer.

It localises to the cytoplasm. The catalysed reaction is tRNA(Asn) + L-asparagine + ATP = L-asparaginyl-tRNA(Asn) + AMP + diphosphate + H(+). This chain is Asparagine--tRNA ligase, found in Sodalis glossinidius (strain morsitans).